The chain runs to 233 residues: MNMMQVMQSVVWAVLLWPCLVSLGVPLECKDEQGSIILCASISKEKLLDRVIQHAELIYRVSEESCTLFEEMFVPFPMRSQRNQAGYTCATKAFPIPGSKSEIQQISDKWLLHSVLILVQSWIEPLVYLQTTLDRYDDAPDTLLKKTKWVSEKLLSLEQGVVVLIRKMLDDDMLTTSYYEQGVAPYALQPEVLESVLRDYTLLSCFKKDAHKMETFLKLLKCRQTDKYSCFLH.

A signal peptide spans 1-24 (MNMMQVMQSVVWAVLLWPCLVSLG). 3 cysteine pairs are disulfide-bonded: cysteine 29-cysteine 39, cysteine 89-cysteine 205, and cysteine 222-cysteine 230.

The protein belongs to the somatotropin/prolactin family. In terms of tissue distribution, pituitary gland.

Its subcellular location is the secreted. Functionally, may be associated with ion regulation and reproduction. In Oncorhynchus keta (Chum salmon), this protein is Somatolactin.